The primary structure comprises 512 residues: Peroxisomal N(1)-acetyl-spermine/spermidine oxidase (512 aa).

M1 bears the N-acetylmethionine mark. Positions 1–6 are excised as a propeptide; the sequence is MQSGGR. FAD-binding positions include A25, E46, R54, and 70–71; that span reads HW. H73 and V195 together coordinate substrate. FAD is bound at residue V248. N321 lines the substrate pocket. Residues E473 and 482 to 483 each bind FAD; that span reads TT. Residues 510–512 carry the Microbody targeting signal motif; sequence PRL.

The protein belongs to the flavin monoamine oxidase family. In terms of assembly, monomer. The cofactor is FAD.

The protein resides in the peroxisome. It localises to the cytoplasm. The enzyme catalyses N(1)-acetylspermine + O2 + H2O = 3-acetamidopropanal + spermidine + H2O2. It carries out the reaction N(1)-acetylspermidine + O2 + H2O = 3-acetamidopropanal + putrescine + H2O2. It catalyses the reaction N(1),N(12)-diacetylspermine + O2 + H2O = 3-acetamidopropanal + N(1)-acetylspermidine + H2O2. Its pathway is amine and polyamine metabolism; spermine metabolism. Its function is as follows. Flavoenzyme which catalyzes the oxidation of N(1)-acetylspermine to spermidine and is thus involved in the polyamine back-conversion. Can also oxidize N(1)-acetylspermidine to putrescine. Substrate specificity: N(1)-acetylspermine = N(1)-acetylspermidine &gt; N(1),N(12)-diacylspermine &gt;&gt; spermine. Does not oxidize spermidine. Plays an important role in the regulation of polyamine intracellular concentration. The protein is Peroxisomal N(1)-acetyl-spermine/spermidine oxidase (PAOX) of Bos taurus (Bovine).